A 595-amino-acid chain; its full sequence is Aspartate--tRNA ligase (595 aa).

Glutamate 171 is a binding site for L-aspartate. Positions 195–198 are aspartate; sequence QLFK. Residue arginine 217 coordinates L-aspartate. ATP is bound by residues 217-219 and glutamine 226; that span reads RDE. Histidine 448 contributes to the L-aspartate binding site. ATP is bound at residue glutamate 482. Residue arginine 489 coordinates L-aspartate. Residue 534-537 coordinates ATP; the sequence is GLDR.

This sequence belongs to the class-II aminoacyl-tRNA synthetase family. Type 1 subfamily. In terms of assembly, homodimer.

The protein resides in the cytoplasm. The catalysed reaction is tRNA(Asp) + L-aspartate + ATP = L-aspartyl-tRNA(Asp) + AMP + diphosphate. Catalyzes the attachment of L-aspartate to tRNA(Asp) in a two-step reaction: L-aspartate is first activated by ATP to form Asp-AMP and then transferred to the acceptor end of tRNA(Asp). This is Aspartate--tRNA ligase from Erwinia tasmaniensis (strain DSM 17950 / CFBP 7177 / CIP 109463 / NCPPB 4357 / Et1/99).